A 355-amino-acid chain; its full sequence is Uroporphyrinogen decarboxylase (355 aa).

Substrate contacts are provided by residues 23–27, D72, Y148, S203, and H321; that span reads RQAGR.

Belongs to the uroporphyrinogen decarboxylase family. As to quaternary structure, homodimer.

Its subcellular location is the cytoplasm. The catalysed reaction is uroporphyrinogen III + 4 H(+) = coproporphyrinogen III + 4 CO2. Its pathway is porphyrin-containing compound metabolism; protoporphyrin-IX biosynthesis; coproporphyrinogen-III from 5-aminolevulinate: step 4/4. Catalyzes the decarboxylation of four acetate groups of uroporphyrinogen-III to yield coproporphyrinogen-III. The polypeptide is Uroporphyrinogen decarboxylase (Chloroflexus aurantiacus (strain ATCC 29366 / DSM 635 / J-10-fl)).